A 554-amino-acid polypeptide reads, in one-letter code: Arginine--tRNA ligase (554 aa).

A 'HIGH' region motif is present at residues 132-142; it reads ANPTGPLHIGH.

Belongs to the class-I aminoacyl-tRNA synthetase family. Monomer.

The protein resides in the cytoplasm. The catalysed reaction is tRNA(Arg) + L-arginine + ATP = L-arginyl-tRNA(Arg) + AMP + diphosphate. In Pseudarthrobacter chlorophenolicus (strain ATCC 700700 / DSM 12829 / CIP 107037 / JCM 12360 / KCTC 9906 / NCIMB 13794 / A6) (Arthrobacter chlorophenolicus), this protein is Arginine--tRNA ligase.